The primary structure comprises 272 residues: Single-strand selective monofunctional uracil DNA glycosylase (272 aa).

A disordered region spans residues 1 to 27 (MAVPQPFPSGPHLQPAGALMEPQPSPR). Residues M86, F100, and N165 each contribute to the substrate site. Positions 175–189 (SGRNITPAELPAKQR) are DNA-binding. H241 is a binding site for substrate.

Belongs to the uracil-DNA glycosylase (UDG) superfamily. SMUG1 family.

The protein resides in the nucleus. Recognizes base lesions in the genome and initiates base excision DNA repair. Acts as a monofunctional DNA glycosylase specific for uracil (U) residues in DNA with a preference for single-stranded DNA substrates. The activity is greater toward mismatches (U/G) compared to matches (U/A). Excises uracil (U), 5-formyluracil (fU) and uracil derivatives bearing an oxidized group at C5 [5-hydroxyuracil (hoU) and 5-hydroxymethyluracil (hmU)] in ssDNA and dsDNA, but not analogous cytosine derivatives (5-hydroxycytosine and 5-formylcytosine), nor other oxidized bases. The activity is damage-specific and salt-dependent. The substrate preference is the following: ssDNA &gt; dsDNA (G pair) = dsDNA (A pair) at low salt concentration, and dsDNA (G pair) &gt; dsDNA (A pair) &gt; ssDNA at high salt concentration. This chain is Single-strand selective monofunctional uracil DNA glycosylase (SMUG1), found in Bos taurus (Bovine).